The chain runs to 130 residues: Large ribosomal subunit protein bL12 (130 aa).

This sequence belongs to the bacterial ribosomal protein bL12 family. Homodimer. Part of the ribosomal stalk of the 50S ribosomal subunit. Forms a multimeric L10(L12)X complex, where L10 forms an elongated spine to which 2 to 4 L12 dimers bind in a sequential fashion. Binds GTP-bound translation factors.

Forms part of the ribosomal stalk which helps the ribosome interact with GTP-bound translation factors. Is thus essential for accurate translation. The protein is Large ribosomal subunit protein bL12 of Cutibacterium acnes (strain DSM 16379 / KPA171202) (Propionibacterium acnes).